We begin with the raw amino-acid sequence, 621 residues long: Signal recognition particle receptor subunit alpha homolog (621 aa).

The segment at 1 to 158 (MFDQLAVFTP…KKFEQYFRIK (158 aa)) is SRX. The interval 167-217 (HINPDNFTKNGSVPQSHNKNTKKKLRDTKGKKQSTGNVGSGRKWGRDGGML) is disordered. Residues 171–183 (DNFTKNGSVPQSH) show a composition bias toward polar residues. The segment covering 185-198 (KNTKKKLRDTKGKK) has biased composition (basic residues). Phosphoserine is present on serine 239. An NG domain region spans residues 398 to 620 (YVFSIVGVNG…SVKWAVNTLM (223 aa)). Residues 404–411 (GVNGVGKS) and 510–514 (DTAGR) contribute to the GTP site. A Phosphoserine modification is found at serine 523. 572–575 (SKCD) contributes to the GTP binding site.

It belongs to the GTP-binding SRP family. As to quaternary structure, heterodimer of an alpha and a beta chain.

The protein resides in the endoplasmic reticulum membrane. In terms of biological role, component of the SRP (signal recognition particle) receptor (SR). Ensures, in conjunction with the signal recognition particle, the correct targeting of the nascent secretory proteins to the endoplasmic reticulum membrane system. GTP hydrolysis may enhance the fidelity of and provide unidirectionality to the targeting reaction. It is important but not essential for cell growth. May be directly involved in mitochondrial protein import. This Saccharomyces cerevisiae (strain ATCC 204508 / S288c) (Baker's yeast) protein is Signal recognition particle receptor subunit alpha homolog (SRP101).